We begin with the raw amino-acid sequence, 431 residues long: ATP-dependent protease ATPase subunit HslU (431 aa).

ATP contacts are provided by residues Val18, 60–65 (GVGKTE), Asp244, Glu309, and Arg381.

This sequence belongs to the ClpX chaperone family. HslU subfamily. In terms of assembly, a double ring-shaped homohexamer of HslV is capped on each side by a ring-shaped HslU homohexamer. The assembly of the HslU/HslV complex is dependent on binding of ATP.

The protein resides in the cytoplasm. In terms of biological role, ATPase subunit of a proteasome-like degradation complex; this subunit has chaperone activity. The binding of ATP and its subsequent hydrolysis by HslU are essential for unfolding of protein substrates subsequently hydrolyzed by HslV. HslU recognizes the N-terminal part of its protein substrates and unfolds these before they are guided to HslV for hydrolysis. The sequence is that of ATP-dependent protease ATPase subunit HslU from Caulobacter sp. (strain K31).